The following is a 560-amino-acid chain: Calcium-binding and coiled-coil domain-containing protein 1-A (560 aa).

2 coiled-coil regions span residues 156–192 and 367–480; these read KATFLQNQLEMAQKERNDLMRARLALEEEVISKEKRI and WWQE…DKML. Residues 480–517 are disordered; sequence LMEDKTDSSPPTLSVDLSDSDDESPGDEGVSQQLGPCS. Residues 487–496 are compositionally biased toward low complexity; that stretch reads SSPPTLSVDL.

Belongs to the CALCOCO family.

The protein localises to the cytoplasm. It is found in the nucleus. Its function is as follows. May function as a coactivator for aryl hydrocarbon and nuclear receptors. In Xenopus laevis (African clawed frog), this protein is Calcium-binding and coiled-coil domain-containing protein 1-A (calcoco1-a).